The chain runs to 341 residues: Golgi-associated RAB2 interactor protein 1B (341 aa).

The protein belongs to the GARIN family. Expressed in testis (at protein level).

It localises to the golgi apparatus. In terms of biological role, RAB2B effector protein required for accurate acrosome formation and normal male fertility. In complex with RAB2A/RAB2B, seems to suppress excessive vesicle trafficking during acrosome formation. The protein is Golgi-associated RAB2 interactor protein 1B of Mus musculus (Mouse).